The following is a 1013-amino-acid chain: Receptor-type tyrosine-protein phosphatase N2 (1013 aa).

Positions 1 to 19 (MALPLLLLLLLLLPPRVLP) are cleaved as a signal peptide. Residues 1–419 (MALPLLLLLL…PGALPFAKPL (419 aa)) are involved in localization to secretory granules; interaction with CPE. Residues 20-613 (AAPSSVPHGR…QAEQEDSTKF (594 aa)) lie on the Extracellular side of the membrane. Disordered stretches follow at residues 116–137 (RHPE…ERRY), 273–302 (MPRP…TGEG), 342–382 (DHRG…VQDD), and 401–487 (LQDH…SLPA). A compositionally biased stretch (basic and acidic residues) spans 419 to 430 (LKMERKKSERPE). Residues S434 and S435 each carry the phosphoserine modification. N-linked (GlcNAc...) asparagine glycosylation is present at N562. A helical membrane pass occupies residues 614 to 634 (IALTLVSLACILGVLLASGLI). Residues 635–1013 (YCLRHSSQHR…VNAILKALPQ (379 aa)) lie on the Cytoplasmic side of the membrane. The short motif at 664–673 (YQELCRQRMA) is the Tyrosine-based internalization motif element. The disordered stretch occupies residues 673-717 (ATRPPDRPEGPHTSRISSVSSQFSDGPMPSPSARSSASSWSEEPV). Over residues 686–696 (SRISSVSSQFS) the composition is skewed to polar residues. A phosphoserine mark is found at S690 and S696. The span at 703 to 717 (PSARSSASSWSEEPV) shows a compositional bias: low complexity. In terms of domain architecture, Tyrosine-protein phosphatase spans 743–1003 (LEKEWEALCA…EFALTAVAEE (261 aa)). Substrate-binding positions include D911 and 943-949 (CSDGAGR). C943 functions as the Phosphocysteine intermediate in the catalytic mechanism. K968 is modified (N6-acetyllysine). Q988 serves as a coordination point for substrate. A Leucine-based sorting signal motif is present at residues 1002 to 1008 (EEVNAIL).

The protein belongs to the protein-tyrosine phosphatase family. Receptor class 8 subfamily. Self-associates. Interacts (via cytoplasmic domain) with PTPRN (via cytoplasmic domain). Interacts (precursor form) with CPE. Interacts with HAP1. Interacts with AP2A1 or AP2A2 and AP1G1; indicative for an association with adaptor protein complex 2 (AP-2) and adaptor protein complex 1 (AP-1). Interacts with AP2M1; indicative for an association with adaptor protein complex 2 (AP-2). Interacts with MYO5A. Post-translationally, subject to proteolytic cleavage at multiple sites. Detected in pancreatic islets and adrenal medulla.

Its subcellular location is the cytoplasmic vesicle. The protein localises to the secretory vesicle membrane. It is found in the secretory vesicle. The protein resides in the synaptic vesicle membrane. The catalysed reaction is O-phospho-L-tyrosyl-[protein] + H2O = L-tyrosyl-[protein] + phosphate. In terms of biological role, plays a role in vesicle-mediated secretory processes. Required for normal accumulation of secretory vesicles in hippocampus, pituitary and pancreatic islets. Required for the accumulation of normal levels of insulin-containing vesicles and preventing their degradation. Plays a role in insulin secretion in response to glucose stimuli. Required for normal accumulation of the neurotransmitters norepinephrine, dopamine and serotonin in the brain. In females, but not in males, required for normal accumulation and secretion of pituitary hormones, such as luteinizing hormone (LH) and follicle-stimulating hormone (FSH). Required to maintain normal levels of renin expression and renin release. May regulate catalytic active protein-tyrosine phosphatases such as PTPRA through dimerization. Has phosphatidylinositol phosphatase activity; the PIPase activity is involved in its ability to regulate insulin secretion. Can dephosphorylate phosphatidylinositol 4,5-biphosphate, phosphatidylinositol 5-phosphate and phosphatidylinositol 3-phosphate. Regulates PI(4,5)P2 level in the plasma membrane and localization of cofilin at the plasma membrane and thus is indirectly involved in regulation of actin dynamics related to cell migration and metastasis; upon hydrolysis of PI(4,5)P2 cofilin is released from the plasma membrane and acts in the cytoplasm in severing F-actin filaments. The sequence is that of Receptor-type tyrosine-protein phosphatase N2 (PTPRN2) from Macaca nemestrina (Pig-tailed macaque).